The sequence spans 453 residues: Folate transporter 1 (453 aa).

Residue N36 is glycosylated (N-linked (GlcNAc...) asparagine). Helical transmembrane passes span 48–68 (PYWTYSYMLALIPMFILTDIL), 73–93 (IVMIEAIGLVATWALLVFGKG), 102–122 (VSFGVASAAEIAYYSYIYSIV), 136–156 (AAALMGKLVAFGLGQTLISTH), and 161–181 (LVLNQISLGAVCLVTIIAIFL). A glycan (N-linked (GlcNAc...) asparagine) is linked at N260. Helical transmembrane passes span 276 to 296 (VANGVVEFVNTALGAFLSLFI), 306 to 326 (HGQMILFITSAIVAVLLYLCS), 331 to 351 (VLVAYSSYVVITSIYHMLITA), 368 to 388 (IFGCNTFVAVCLQSLLTLVVV), and 401 to 421 (FVIYSGYFALVASIFAFFFMI).

Belongs to the reduced folate carrier (RFC) transporter (TC 2.A.48) family. In terms of tissue distribution, highly expressed in pharynx and posterior part of the intestine. Expressed at lower levels in the body wall muscles, head muscles, and vulva muscles. Highly expressed in the intestine of the early larva, levels decrease in the later stages of development.

It is found in the membrane. In terms of biological role, folate transporter. The polypeptide is Folate transporter 1 (folt-1) (Caenorhabditis elegans).